The chain runs to 139 residues: Protein shisa-5 (139 aa).

Residues 3–23 (FGTLVAIGVIVFAVVVITIIL) traverse the membrane as a helical segment.

It belongs to the shisa family.

Its subcellular location is the endoplasmic reticulum membrane. The protein localises to the nucleus membrane. Its function is as follows. Can induce apoptosis in a caspase-dependent manner and plays a role in p53/TP53-dependent apoptosis. This is Protein shisa-5 (Shisa5) from Gallus gallus (Chicken).